Consider the following 225-residue polypeptide: MNSIKFPVLDRTTKNSVISTTLNDLSNWSRLSSLWPFLYGTSCCFIEFASLIGSRFDFDRYGLVPRSSPRQADLILTAGTVTMKMAPSLVRLYEQMPEPKYVIAMGACTITGGMFSTDSYSTVRGVDKLIPVDVYLPGCPPKPEAVIDAITKLRKKIAREIYTDRIRPQQGNRCFTTNHKFFVVRSTHTGNSDQQLLYPPPSTSEISTETFFKYKSPVSSHELVN.

Residues cysteine 43, cysteine 44, cysteine 108, and cysteine 139 each coordinate [4Fe-4S] cluster.

This sequence belongs to the complex I 20 kDa subunit family. As to quaternary structure, NDH is composed of at least 16 different subunits, 5 of which are encoded in the nucleus. [4Fe-4S] cluster serves as cofactor.

It is found in the plastid. The protein resides in the chloroplast thylakoid membrane. The enzyme catalyses a plastoquinone + NADH + (n+1) H(+)(in) = a plastoquinol + NAD(+) + n H(+)(out). The catalysed reaction is a plastoquinone + NADPH + (n+1) H(+)(in) = a plastoquinol + NADP(+) + n H(+)(out). Its function is as follows. NDH shuttles electrons from NAD(P)H:plastoquinone, via FMN and iron-sulfur (Fe-S) centers, to quinones in the photosynthetic chain and possibly in a chloroplast respiratory chain. The immediate electron acceptor for the enzyme in this species is believed to be plastoquinone. Couples the redox reaction to proton translocation, and thus conserves the redox energy in a proton gradient. This is NAD(P)H-quinone oxidoreductase subunit K, chloroplastic from Draba nemorosa (Woodland whitlowgrass).